A 186-amino-acid chain; its full sequence is MAAVDSSVSGVSGRYATALFELAREDKSIDAVKADLDRFDAMLADSPELARLVRSPVFSADTQAKALAAVLDKAGFGGTTAKFLKVLTANRRLFAVTEVIRAFRALVARFKGEVTAEVTVAETLNKKNLDALTTALKSVTGKDITLNVKVDPSIIGGLVVKLGSRMVDSSLRTKLNSIKHAMKEAG.

Belongs to the ATPase delta chain family. As to quaternary structure, F-type ATPases have 2 components, F(1) - the catalytic core - and F(0) - the membrane proton channel. F(1) has five subunits: alpha(3), beta(3), gamma(1), delta(1), epsilon(1). F(0) has three main subunits: a(1), b(2) and c(10-14). The alpha and beta chains form an alternating ring which encloses part of the gamma chain. F(1) is attached to F(0) by a central stalk formed by the gamma and epsilon chains, while a peripheral stalk is formed by the delta and b chains.

Its subcellular location is the cell inner membrane. Functionally, f(1)F(0) ATP synthase produces ATP from ADP in the presence of a proton or sodium gradient. F-type ATPases consist of two structural domains, F(1) containing the extramembraneous catalytic core and F(0) containing the membrane proton channel, linked together by a central stalk and a peripheral stalk. During catalysis, ATP synthesis in the catalytic domain of F(1) is coupled via a rotary mechanism of the central stalk subunits to proton translocation. In terms of biological role, this protein is part of the stalk that links CF(0) to CF(1). It either transmits conformational changes from CF(0) to CF(1) or is implicated in proton conduction. The protein is ATP synthase subunit delta of Nitrobacter hamburgensis (strain DSM 10229 / NCIMB 13809 / X14).